A 121-amino-acid polypeptide reads, in one-letter code: MRPAKSVEGYIIIVTGVHPEATEEQVEDLFADFGPVKNLHLNLDRRTGYVKGYALIEYATLEQAQKAVDEKNLSLLDEKLEVDFAFLEPPERAPRPSISTRSRSQSPEVQHRDRDVAMAEP.

Residues 10-87 (YIIIVTGVHP…EKLEVDFAFL (78 aa)) form the RRM domain. The disordered stretch occupies residues 90–121 (PERAPRPSISTRSRSQSPEVQHRDRDVAMAEP). A compositionally biased stretch (polar residues) spans 97 to 108 (SISTRSRSQSPE). Over residues 109–121 (VQHRDRDVAMAEP) the composition is skewed to basic and acidic residues.

It is found in the cytoplasm. The protein localises to the nucleus. This is an uncharacterized protein from Schizosaccharomyces pombe (strain 972 / ATCC 24843) (Fission yeast).